A 149-amino-acid polypeptide reads, in one-letter code: Protein SprT-like (149 aa).

The 140-residue stretch at 4–143 folds into the SprT-like domain; the sequence is TDYVKQVSLE…CGLCRGKLLL (140 aa). His64 serves as a coordination point for Zn(2+). Glu65 is an active-site residue. His68 provides a ligand contact to Zn(2+).

Belongs to the SprT family. Requires Zn(2+) as cofactor.

Its subcellular location is the cytoplasm. The protein is Protein SprT-like of Streptococcus pneumoniae (strain JJA).